The following is a 598-amino-acid chain: DNA primase (598 aa).

The CHC2-type zinc-finger motif lies at 38-62 (CPFHDEKTPSFTVSEDKQICHCFGC). In terms of domain architecture, Toprim spans 260-341 (DEIILLEGFM…NVYVVQLPSG (82 aa)). Mg(2+) contacts are provided by Glu266, Asp310, and Asp312.

This sequence belongs to the DnaG primase family. Monomer. Interacts with DnaB. The cofactor is Zn(2+). Requires Mg(2+) as cofactor.

The catalysed reaction is ssDNA + n NTP = ssDNA/pppN(pN)n-1 hybrid + (n-1) diphosphate.. RNA polymerase that catalyzes the synthesis of short RNA molecules used as primers for DNA polymerase during DNA replication. In Staphylococcus epidermidis (strain ATCC 12228 / FDA PCI 1200), this protein is DNA primase.